The sequence spans 667 residues: MSREPEIMESQVMWEPDSKRNTHMDRFRAAVAGSCGLRLANYNDLYQWSVESFADFWAEFWKYSNIVCSRLYDEVVDTSKSIADVPEWFKGSRLNYAENLLKHKDNDKIALYAAKEGKEEILKVTFEELRQAVALYAAAMRKMGVKIGDRVVGYLPNSIHAVEAMLAAASIGAIWSSTSPDFGINGVLDRFSQIQPKLIFSVEAVVYNGKEHNHLEKLLSVVKGLPDLKKVVVIPYVSSRETIDISKIPNSVFLEDFLATGKGDQAPQLEFEQLPFSHPLFIMYSSGTTGAPKCMVHSAGGTLIQHLKEHILHGNMSSNDIIMYYTTTGWMMWNWLVTALATGASVVLYDGSPLVPSPNVLWDLIDRLGITILGTGAKWLAVLEEKNLKPCETHNLQTLHTILSTGSPLKSQSYEYVYKHIKSSVLLGSISGGTDIISCFMGQNVTIPVYKGEIQARNLGMAVEAWNDEGKPVWGESGELVCTKPIPCQPTHFWNDENGSKYRKAYFSKFPGVWAHGDYCKINPKTGGIVMLGRSDGTLNPNGVRFGSSEIYNIVEAFEEVSDSLCVPQYNKDGEERVILFLKMASNHAFSEDLVKRIRDAIRVALSARHVPSLILETKGIPYTINGKKVEVAVKQIIAGKEVEQRGAFSNPETLDLYQNIPELQNF.

Belongs to the ATP-dependent AMP-binding enzyme family.

The protein localises to the cytoplasm. It is found in the cytosol. It catalyses the reaction acetoacetate + ATP + CoA = acetoacetyl-CoA + AMP + diphosphate. Converts acetoacetate to acetoacetyl-CoA in the cytosol. Ketone body-utilizing enzyme, responsible for the synthesis of cholesterol and fatty acids. The chain is Acetoacetyl-CoA synthetase (AACS) from Gallus gallus (Chicken).